The sequence spans 506 residues: Xaa-Pro aminopeptidase 3 (506 aa).

A mitochondrion-targeting transit peptide spans 1–31 (MLSLLSTPRLVPVIARLRGLSGCMSCLQRRY). Residues 54-79 (HPHLLRPGEVTPGLSQVEYALRRHKL) form an interaction with TNFRSF1B region. Positions 300, 331, 342, 423, 430, 450, and 474 each coordinate substrate. Positions 331, 342, and 423 each coordinate Mn(2+). Residues Glu-450 and Glu-474 each coordinate Mn(2+).

Belongs to the peptidase M24B family. Homodimer. Interacts with TNFRSF1B/TNFR2 (activated) and TRAF2. It depends on Mn(2+) as a cofactor. As to expression, expressed in the kidney, specifically in intercalated cells, but not in principal cells, of the distal convoluted tubule and cortical collecting duct (at protein level).

It is found in the mitochondrion. The protein resides in the cytoplasm. It catalyses the reaction Release of any N-terminal amino acid, including proline, that is linked to proline, even from a dipeptide or tripeptide.. In terms of biological role, catalyzes the removal of a penultimate prolyl residue from the N-termini of peptides, such as Leu-Pro-Ala. Also shows low activity towards peptides with Ala or Ser at the P1 position. Promotes TNFRSF1B-mediated phosphorylation of MAPK8/JNK1 and MAPK9/JNK2, suggesting a function as an adapter protein for TNFRSF1B; the effect is independent of XPNPEP3 peptidase activity. May inhibit apoptotic cell death induced via TNF-TNFRSF1B signaling. The polypeptide is Xaa-Pro aminopeptidase 3 (Xpnpep3) (Rattus norvegicus (Rat)).